Consider the following 330-residue polypeptide: Lipoyl synthase (330 aa).

Residues 1-31 (MSDAPIATSSEVTQSPADYDPTKKQKSAEKT) form a disordered region. Residues 7–16 (ATSSEVTQSP) are compositionally biased toward polar residues. Residues 20–31 (DPTKKQKSAEKT) show a composition bias toward basic and acidic residues. [4Fe-4S] cluster contacts are provided by Cys-77, Cys-82, Cys-88, Cys-103, Cys-107, Cys-110, and Ser-317. Residues 88–306 (CFGKGTATFM…EEEAYKMGFT (219 aa)) form the Radical SAM core domain.

The protein belongs to the radical SAM superfamily. Lipoyl synthase family. [4Fe-4S] cluster serves as cofactor.

The protein localises to the cytoplasm. It carries out the reaction [[Fe-S] cluster scaffold protein carrying a second [4Fe-4S](2+) cluster] + N(6)-octanoyl-L-lysyl-[protein] + 2 oxidized [2Fe-2S]-[ferredoxin] + 2 S-adenosyl-L-methionine + 4 H(+) = [[Fe-S] cluster scaffold protein] + N(6)-[(R)-dihydrolipoyl]-L-lysyl-[protein] + 4 Fe(3+) + 2 hydrogen sulfide + 2 5'-deoxyadenosine + 2 L-methionine + 2 reduced [2Fe-2S]-[ferredoxin]. It functions in the pathway protein modification; protein lipoylation via endogenous pathway; protein N(6)-(lipoyl)lysine from octanoyl-[acyl-carrier-protein]: step 2/2. Its function is as follows. Catalyzes the radical-mediated insertion of two sulfur atoms into the C-6 and C-8 positions of the octanoyl moiety bound to the lipoyl domains of lipoate-dependent enzymes, thereby converting the octanoylated domains into lipoylated derivatives. This Cupriavidus metallidurans (strain ATCC 43123 / DSM 2839 / NBRC 102507 / CH34) (Ralstonia metallidurans) protein is Lipoyl synthase.